Here is a 101-residue protein sequence, read N- to C-terminus: Small ribosomal subunit protein uS14 (101 aa).

This sequence belongs to the universal ribosomal protein uS14 family. Part of the 30S ribosomal subunit. Contacts proteins S3 and S10.

Functionally, binds 16S rRNA, required for the assembly of 30S particles and may also be responsible for determining the conformation of the 16S rRNA at the A site. The sequence is that of Small ribosomal subunit protein uS14 from Alkalilimnicola ehrlichii (strain ATCC BAA-1101 / DSM 17681 / MLHE-1).